Here is a 107-residue protein sequence, read N- to C-terminus: UPF0060 membrane protein RPB_2370 (107 aa).

Transmembrane regions (helical) follow at residues 5–25 (IIYV…WGWL), 31–51 (VWWL…LTLV), 61–81 (AAYG…VEGV), and 85–105 (RWDV…LWGP).

It belongs to the UPF0060 family.

Its subcellular location is the cell inner membrane. The sequence is that of UPF0060 membrane protein RPB_2370 from Rhodopseudomonas palustris (strain HaA2).